A 435-amino-acid chain; its full sequence is Xylose isomerase (435 aa).

Active-site residues include histidine 100 and aspartate 103. The Mg(2+) site is built by glutamate 231, glutamate 267, histidine 270, aspartate 295, aspartate 306, aspartate 308, and aspartate 338.

Belongs to the xylose isomerase family. Homotetramer. Mg(2+) serves as cofactor.

It is found in the cytoplasm. The catalysed reaction is alpha-D-xylose = alpha-D-xylulofuranose. The protein is Xylose isomerase of Brucella canis (strain ATCC 23365 / NCTC 10854 / RM-666).